Reading from the N-terminus, the 101-residue chain is Ferredoxin-3 (101 aa).

4Fe-4S ferredoxin-type domains are found at residues 17–46 (YLMK…LHGL) and 70–100 (KVMA…HAAL). Residues Cys26, Cys29, Cys32, Cys36, Cys80, Cys83, Cys86, and Cys90 each coordinate [4Fe-4S] cluster.

As to quaternary structure, homodimer. [4Fe-4S] cluster serves as cofactor.

Ferredoxins are iron-sulfur proteins that transfer electrons in a wide variety of metabolic reactions. This is Ferredoxin-3 (fdxB) from Rhodobacter capsulatus (Rhodopseudomonas capsulata).